We begin with the raw amino-acid sequence, 160 residues long: 2-C-methyl-D-erythritol 2,4-cyclodiphosphate synthase (160 aa).

The a divalent metal cation site is built by aspartate 9 and histidine 11. 4-CDP-2-C-methyl-D-erythritol 2-phosphate contacts are provided by residues 9–11 (DVH) and 35–36 (HS). Histidine 43 is a binding site for a divalent metal cation. 4-CDP-2-C-methyl-D-erythritol 2-phosphate is bound by residues 57–59 (DIG), 62–66 (FPDTD), 101–107 (AEAPKMA), 133–136 (TTSE), phenylalanine 140, and arginine 143.

Belongs to the IspF family. Homotrimer. The cofactor is a divalent metal cation.

It carries out the reaction 4-CDP-2-C-methyl-D-erythritol 2-phosphate = 2-C-methyl-D-erythritol 2,4-cyclic diphosphate + CMP. It functions in the pathway isoprenoid biosynthesis; isopentenyl diphosphate biosynthesis via DXP pathway; isopentenyl diphosphate from 1-deoxy-D-xylulose 5-phosphate: step 4/6. In terms of biological role, involved in the biosynthesis of isopentenyl diphosphate (IPP) and dimethylallyl diphosphate (DMAPP), two major building blocks of isoprenoid compounds. Catalyzes the conversion of 4-diphosphocytidyl-2-C-methyl-D-erythritol 2-phosphate (CDP-ME2P) to 2-C-methyl-D-erythritol 2,4-cyclodiphosphate (ME-CPP) with a corresponding release of cytidine 5-monophosphate (CMP). This is 2-C-methyl-D-erythritol 2,4-cyclodiphosphate synthase from Methylobacillus flagellatus (strain ATCC 51484 / DSM 6875 / VKM B-1610 / KT).